Consider the following 967-residue polypeptide: Protein moonraker (967 aa).

The tract at residues 178–201 (SHPGQSDLTVPNSPPTHDPGLQPH) is disordered. The segment covering 179–188 (HPGQSDLTVP) has biased composition (polar residues). Phosphoserine is present on residues Ser-287 and Ser-409. Disordered regions lie at residues 401–431 (ALER…SRPS) and 490–601 (KAGK…SHLT). The span at 525 to 543 (QSQPHSKSRVQQTTVSSRL) shows a compositional bias: polar residues. Pro residues predominate over residues 557–568 (WIPPNPTSPPAS). Residues 616–642 (AETSKRLKELEELKAKEIDSMQKQRLD) are a coiled coil. Phosphoserine is present on residues Ser-700 and Ser-826. The segment at 849 to 872 (RPCNGNSLDESVGTEEGSEKREAP) is disordered. A necessary and sufficient for CEP20-binding region spans residues 885–967 (GRAPLFVPPG…FTSEFLEAAT (83 aa)).

Interacts with CEP63. Interacts with WDR62. Forms a complex with OFD1 and CEP20/FOR20. Interacts with PCM1.

It is found in the cytoplasm. The protein resides in the cytoskeleton. The protein localises to the microtubule organizing center. Its subcellular location is the centrosome. It localises to the centriole. It is found in the centriolar satellite. Its function is as follows. Involved in centriole duplication. Positively regulates CEP63 centrosomal localization. Required for WDR62 centrosomal localization and promotes the centrosomal localization of CDK2. May play a role in cilium assembly. The sequence is that of Protein moonraker (KIAA0753) from Homo sapiens (Human).